A 437-amino-acid polypeptide reads, in one-letter code: Epsilon-sarcoglycan (437 aa).

Residues 1–317 are Extracellular-facing; that stretch reads MQLPWWWELG…LKSRDYYTDF (317 aa). Asn200 carries an N-linked (GlcNAc...) asparagine glycan. Residues 318–338 traverse the membrane as a helical segment; the sequence is LVTLAVPSAVALVLFLILAYI. Residues 339–437 lie on the Cytoplasmic side of the membrane; that stretch reads MCCRREGVEK…QQQTTGKWYS (99 aa). Residues 418-437 form a disordered region; that stretch reads QNLPHQTQIPQQQTTGKWYS.

It belongs to the sarcoglycan alpha/epsilon family. In terms of processing, N-glycosylated. Post-translationally, ubiquitinated, leading to its degradation by the proteasome.

The protein resides in the cell membrane. Its subcellular location is the sarcolemma. It localises to the cytoplasm. It is found in the cytoskeleton. The protein localises to the cell projection. The protein resides in the dendrite. Its subcellular location is the golgi apparatus. Its function is as follows. Component of the sarcoglycan complex, a subcomplex of the dystrophin-glycoprotein complex which forms a link between the F-actin cytoskeleton and the extracellular matrix. The protein is Epsilon-sarcoglycan (SGCE) of Bos taurus (Bovine).